A 284-amino-acid polypeptide reads, in one-letter code: Tripartite motif-containing protein 12A (284 aa).

The RING-type zinc-finger motif lies at 15 to 59 (CPVCLNLMVKPVSADCGHTFCQGCITLYFESIKCDKKVFICPVCR). Residues 91 to 132 (QKVFNCARHGKKLQLFCRKDMMAICWLCERSQEHRGHKTALI) form a B box-type zinc finger. Residues Cys96, His99, Cys118, and His124 each contribute to the Zn(2+) site. Residues 130-234 (ALIEEVAQEY…QSKLLEDFIS (105 aa)) are a coiled coil.

Belongs to the TRIM/RBCC family. In terms of tissue distribution, expressed in embryonic CNS, liver, kidney, olfactory epithelium.

The protein resides in the cytoplasm. In Mus musculus (Mouse), this protein is Tripartite motif-containing protein 12A (Trim12a).